We begin with the raw amino-acid sequence, 92 residues long: Small ribosomal subunit protein uS19 (92 aa).

This sequence belongs to the universal ribosomal protein uS19 family.

In terms of biological role, protein S19 forms a complex with S13 that binds strongly to the 16S ribosomal RNA. This Rickettsia prowazekii (strain Madrid E) protein is Small ribosomal subunit protein uS19 (rpsS).